Consider the following 30-residue polypeptide: Sillucin (30 aa).

Cystine bridges form between Cys2/Cys7, Cys12/Cys24, Cys13/Cys30, and Cys14/Cys21.

The protein localises to the secreted. Sillucin is an antimicrobial agent produced by the thermophilic fungus Rhizomucor pusillus in liquid culture; it is effective against Gram-positive bacteria at the level of RNA metabolism. This Rhizomucor pusillus protein is Sillucin.